We begin with the raw amino-acid sequence, 83 residues long: Toxin Aam1 (83 aa).

The first 19 residues, 1–19, serve as a signal peptide directing secretion; the sequence is MNYLVMISLALLLMIGVES. An LCN-type CS-alpha/beta domain is found at 21–82; sequence RDGYIVYPHN…PIYDRSYKCY (62 aa). 4 disulfides stabilise this stretch: Cys31–Cys81, Cys35–Cys53, Cys39–Cys63, and Cys43–Cys65.

Belongs to the long (4 C-C) scorpion toxin superfamily. Sodium channel inhibitor family. Alpha subfamily. The C-terminal basic residue is removed by a carboxypeptidase. In terms of tissue distribution, expressed by the venom gland.

It localises to the secreted. Functionally, alpha toxins bind voltage-independently at site-3 of sodium channels (Nav) and inhibit the inactivation of the activated channels, thereby blocking neuronal transmission. The chain is Toxin Aam1 (H1) from Androctonus amoreuxi (African fattail scorpion).